Here is a 640-residue protein sequence, read N- to C-terminus: MPVITLPDGSQRSFDHAVSVAEVAASIGAGLAKATVAGKVDGKLVDACDLISNDATLQIITPKDEEGLEIIRHSCAHLVGHAVKQLYPTAKMVIGPVIDEGFYYDIAYERPFTPEDMAAIEKRMMELIEKDYDVVKKMTPRAEVIDVFKARGEDYKLRLVEDMPDEQAMGLYYHEEYVDMCRGPHVPNTRFLKAFKLTKLSGAYWRGDAKNEQLQRVYGTAWADKKQLAAYIQRIEEAEKRDHRKIGKQLDLFHLQEEAPGMVFWHANGWTVYQVLEQYMRGVQRENGYQEIKTPQVVDRILWERSGHWSNYAENMFTTSSESRDYAVKPMNCPCHVQVFNQGLKSYRDLPLRLAEFGACHRNEPSGALHGIMRVRGFVQDDAHIFCTEDQVKKEAADFIKLTLDVYKDFGFSDIAMKLSTRPAKRVGSEELWDRAETALADALNESGLEWEYQPGEGAFYGPKIEFTLRDCLGRNWQCGTLQYDPNLPERLDASYIAEDNSRVRPVMLHRAILGSFERFIGMLIEHYAGVFPAWLAPTQAVIMNITDKQADFALEVEKSLNGSGFRAKSDLRNEKIGFKIREHTLLKVPYLLVIGDREVETQTVAVRTREGADLGSMPVAQFVELLTQAVSRRGRQESE.

Residues 1–61 (MPVITLPDGS…SNDATLQIIT (61 aa)) enclose the TGS domain. Positions 242–533 (DHRKIGKQLD…LIEHYAGVFP (292 aa)) are catalytic. The Zn(2+) site is built by cysteine 333, histidine 384, and histidine 510.

The protein belongs to the class-II aminoacyl-tRNA synthetase family. As to quaternary structure, homodimer. The cofactor is Zn(2+).

It localises to the cytoplasm. It carries out the reaction tRNA(Thr) + L-threonine + ATP = L-threonyl-tRNA(Thr) + AMP + diphosphate + H(+). Its function is as follows. Catalyzes the attachment of threonine to tRNA(Thr) in a two-step reaction: L-threonine is first activated by ATP to form Thr-AMP and then transferred to the acceptor end of tRNA(Thr). Also edits incorrectly charged L-seryl-tRNA(Thr). The sequence is that of Threonine--tRNA ligase from Pseudomonas putida (strain ATCC 47054 / DSM 6125 / CFBP 8728 / NCIMB 11950 / KT2440).